Consider the following 70-residue polypeptide: Bowman-Birk type proteinase inhibitor A-II (70 aa).

7 disulfide bridges follow: Cys11–Cys68, Cys12–Cys29, Cys15–Cys63, Cys17–Cys27, Cys36–Cys43, Cys40–Cys55, and Cys45–Cys53.

Belongs to the Bowman-Birk serine protease inhibitor family.

These proteins inhibit trypsin and chymotrypsin, having 2 sites of interaction with trypsin. The site of interaction with chymotrypsin has not been determined but is not independent of the trypsin-reactive sites. The polypeptide is Bowman-Birk type proteinase inhibitor A-II (Arachis hypogaea (Peanut)).